Consider the following 163-residue polypeptide: Nucleotide-binding protein cbdbA1256 (163 aa).

This sequence belongs to the YajQ family.

Nucleotide-binding protein. The polypeptide is Nucleotide-binding protein cbdbA1256 (Dehalococcoides mccartyi (strain CBDB1)).